A 572-amino-acid chain; its full sequence is MRTSQYLLSTLKETPADAEVISHQLMLRAGMIRKLASGLYTWLPTGLRVLKKVENIVREEMNNAGAIEVSMPVVQPADLWQESGRWEQYGPELLRFVDRGERPFVLGPTHEEVITDLVRNELSSYKQLPLNFFQIQTKFRDEVRPRFGVMRSREFLMKDAYSFHTSQESLQETYDAMYAAYSRIFSRMGLDFRAVQADTGSIGGNASHEFQVLAQSGEDDIVFSDVSDYAANIELAEAIAPQTPRAAATQEMTLIDTPNAKTIAELVEQFNLPIEKTVKTLLVKAVKDSKSPLVALLVRGDHELNEVKAEKLPNVASPLTFATEEEIRAVINAGPGSLGPVNMPVPVIIDRSVAAMSDFAAGANIDGKHYFGINWDRDVATPIVADIRNVVAGDPSPDGQGTLLIKRGIEVGHIFQLGTKYSEALKASVQGEDGRNQILTMGCYGIGVTRVVAAAIEQNFDERGIVWPDAIAPFQVAILPMNMHKSFRVQELAEKLYSELRAQGIEVLMDDRKERPGVMFADMELIGIPHTIVIGDRNLDNDDIEYKYRRSGEKSLIKTGDIVDYLVKAIKG.

This sequence belongs to the class-II aminoacyl-tRNA synthetase family. ProS type 1 subfamily. Homodimer.

It is found in the cytoplasm. The catalysed reaction is tRNA(Pro) + L-proline + ATP = L-prolyl-tRNA(Pro) + AMP + diphosphate. Functionally, catalyzes the attachment of proline to tRNA(Pro) in a two-step reaction: proline is first activated by ATP to form Pro-AMP and then transferred to the acceptor end of tRNA(Pro). As ProRS can inadvertently accommodate and process non-cognate amino acids such as alanine and cysteine, to avoid such errors it has two additional distinct editing activities against alanine. One activity is designated as 'pretransfer' editing and involves the tRNA(Pro)-independent hydrolysis of activated Ala-AMP. The other activity is designated 'posttransfer' editing and involves deacylation of mischarged Ala-tRNA(Pro). The misacylated Cys-tRNA(Pro) is not edited by ProRS. The protein is Proline--tRNA ligase of Salmonella arizonae (strain ATCC BAA-731 / CDC346-86 / RSK2980).